Reading from the N-terminus, the 89-residue chain is Small ribosomal subunit protein uS15 (89 aa).

The protein belongs to the universal ribosomal protein uS15 family. Part of the 30S ribosomal subunit. Forms a bridge to the 50S subunit in the 70S ribosome, contacting the 23S rRNA.

Its function is as follows. One of the primary rRNA binding proteins, it binds directly to 16S rRNA where it helps nucleate assembly of the platform of the 30S subunit by binding and bridging several RNA helices of the 16S rRNA. Forms an intersubunit bridge (bridge B4) with the 23S rRNA of the 50S subunit in the ribosome. The sequence is that of Small ribosomal subunit protein uS15 from Polynucleobacter asymbioticus (strain DSM 18221 / CIP 109841 / QLW-P1DMWA-1) (Polynucleobacter necessarius subsp. asymbioticus).